We begin with the raw amino-acid sequence, 138 residues long: Putative pre-16S rRNA nuclease (138 aa).

The protein belongs to the YqgF nuclease family.

The protein resides in the cytoplasm. Its function is as follows. Could be a nuclease involved in processing of the 5'-end of pre-16S rRNA. The polypeptide is Putative pre-16S rRNA nuclease (Salmonella typhimurium (strain LT2 / SGSC1412 / ATCC 700720)).